Consider the following 145-residue polypeptide: uncharacterized protein (145 aa).

The protein belongs to the asfivirus K145R family.

Its subcellular location is the virion. This is an uncharacterized protein from African swine fever virus (isolate Tick/South Africa/Pretoriuskop Pr4/1996) (ASFV).